Reading from the N-terminus, the 287-residue chain is ATP synthase gamma chain (287 aa).

The protein belongs to the ATPase gamma chain family. In terms of assembly, F-type ATPases have 2 components, CF(1) - the catalytic core - and CF(0) - the membrane proton channel. CF(1) has five subunits: alpha(3), beta(3), gamma(1), delta(1), epsilon(1). CF(0) has three main subunits: a, b and c.

The protein localises to the cell membrane. Its function is as follows. Produces ATP from ADP in the presence of a proton gradient across the membrane. The gamma chain is believed to be important in regulating ATPase activity and the flow of protons through the CF(0) complex. The sequence is that of ATP synthase gamma chain from Geobacillus stearothermophilus (Bacillus stearothermophilus).